Consider the following 399-residue polypeptide: Methylthioribose kinase (399 aa).

ATP is bound by residues asparagine 40, lysine 57, and 111 to 113 (EDL). Aspartate 229 serves as a coordination point for substrate. 246–248 (DAE) contributes to the ATP binding site. Arginine 344 serves as a coordination point for substrate.

This sequence belongs to the methylthioribose kinase family. As to quaternary structure, homodimer.

The catalysed reaction is 5-(methylsulfanyl)-D-ribose + ATP = 5-(methylsulfanyl)-alpha-D-ribose 1-phosphate + ADP + H(+). It functions in the pathway amino-acid biosynthesis; L-methionine biosynthesis via salvage pathway; S-methyl-5-thio-alpha-D-ribose 1-phosphate from S-methyl-5'-thioadenosine (hydrolase route): step 2/2. Functionally, catalyzes the phosphorylation of methylthioribose into methylthioribose-1-phosphate. In Enterobacter sp. (strain 638), this protein is Methylthioribose kinase.